The primary structure comprises 430 residues: Gamma-glutamyl phosphate reductase (430 aa).

The protein belongs to the gamma-glutamyl phosphate reductase family.

It localises to the cytoplasm. It carries out the reaction L-glutamate 5-semialdehyde + phosphate + NADP(+) = L-glutamyl 5-phosphate + NADPH + H(+). The protein operates within amino-acid biosynthesis; L-proline biosynthesis; L-glutamate 5-semialdehyde from L-glutamate: step 2/2. In terms of biological role, catalyzes the NADPH-dependent reduction of L-glutamate 5-phosphate into L-glutamate 5-semialdehyde and phosphate. The product spontaneously undergoes cyclization to form 1-pyrroline-5-carboxylate. This Methylococcus capsulatus (strain ATCC 33009 / NCIMB 11132 / Bath) protein is Gamma-glutamyl phosphate reductase.